The sequence spans 544 residues: Methionine--tRNA ligase (544 aa).

The short motif at 10–20 (PYANGSLHLGH) is the 'HIGH' region element. Residues C141, C144, C153, and C156 each contribute to the Zn(2+) site. The short motif at 329–333 (KLSTS) is the 'KMSKS' region element. T332 is an ATP binding site.

The protein belongs to the class-I aminoacyl-tRNA synthetase family. MetG type 1 subfamily. In terms of assembly, monomer. Zn(2+) is required as a cofactor.

The protein resides in the cytoplasm. The catalysed reaction is tRNA(Met) + L-methionine + ATP = L-methionyl-tRNA(Met) + AMP + diphosphate. In terms of biological role, is required not only for elongation of protein synthesis but also for the initiation of all mRNA translation through initiator tRNA(fMet) aminoacylation. The protein is Methionine--tRNA ligase of Bacillus cereus (strain AH187).